Reading from the N-terminus, the 148-residue chain is Calcium-regulated heat stable protein 1 (148 aa).

Residues 1 to 12 (MSSEPPPPPLQP) are compositionally biased toward pro residues. A disordered region spans residues 1–47 (MSSEPPPPPLQPPTHQTSVGLLDTPRTRDRSPSPLRGNVVPSPLPTR). The residue at position 2 (S2) is an N-acetylserine. 3 positions are modified to phosphoserine: S31, S33, and S42. A Phosphothreonine modification is found at T46. Phosphoserine is present on residues S53 and S59. A CSD domain is found at 63–130 (VYKGVCKCFC…KLQAVEVVIT (68 aa)). Residue S147 is modified to Phosphoserine.

In terms of assembly, homodimer. Interacts with STYX. Post-translationally, can be phosphorylated by DYRK2 (in vitro). Dephosphorylated by calcineurin in a Ca(2+) dependent manner.

Its subcellular location is the cytoplasm. It is found in the P-body. It localises to the cytoplasmic granule. Binds mRNA and regulates the stability of target mRNA. The chain is Calcium-regulated heat stable protein 1 (Carhsp1) from Mus musculus (Mouse).